We begin with the raw amino-acid sequence, 376 residues long: MSGSVTSTTTETRLCPSNQGSAKKYRPWNDFRSDTLTVPTDEMRRIMYEASDGDCVYEEDEDTRKLEVYVAKLTGKEAALFVTSGTQGNQLCIRSHLHQPPHSIICDDRAHIYNWEAGAIGLFTQAIVRPISPKNNVYITAEEIENKLILGNDIHFSPTGLICLENTIKGAVVPLDEVARISGLAKAHKIPLHCDGARLWDAAVASNVSIKEYCSYFDSVSLCLSKGLAAPVGSIIVGPRDFIAKAKWFRKAYGGGLRQSGMLAAAGLYSIQHNFPLLKQVHKYAIEVAEYAESLGIELEVPTQSNMVTLANINVAILCDEAKKSGIILMGPRIVFHIQITPDAVEILKNVLRRTVERQAVETHIVAKPGEFCVGY.

The segment covering 1 to 21 (MSGSVTSTTTETRLCPSNQGS) has biased composition (polar residues). The disordered stretch occupies residues 1 to 22 (MSGSVTSTTTETRLCPSNQGSA). Lys226 is subject to N6-(pyridoxal phosphate)lysine.

Belongs to the threonine aldolase family. In terms of assembly, homotetramer. The cofactor is pyridoxal 5'-phosphate.

It catalyses the reaction L-threonine = acetaldehyde + glycine. It carries out the reaction L-allo-threonine = acetaldehyde + glycine. Its pathway is amino-acid degradation; L-threonine degradation via aldolase pathway; acetaldehyde and glycine from L-threonine: step 1/1. The polypeptide is Probable low-specificity L-threonine aldolase (gly1) (Schizosaccharomyces pombe (strain 972 / ATCC 24843) (Fission yeast)).